Consider the following 421-residue polypeptide: UDP-N-acetylglucosamine 1-carboxyvinyltransferase 1 (421 aa).

22-23 (KN) provides a ligand contact to phosphoenolpyruvate. Arginine 95 contributes to the UDP-N-acetyl-alpha-D-glucosamine binding site. Residue cysteine 119 is the Proton donor of the active site. Cysteine 119 carries the 2-(S-cysteinyl)pyruvic acid O-phosphothioketal modification. Residues 124–128 (RPIEQ), aspartate 308, and valine 330 contribute to the UDP-N-acetyl-alpha-D-glucosamine site.

The protein belongs to the EPSP synthase family. MurA subfamily.

It is found in the cytoplasm. The enzyme catalyses phosphoenolpyruvate + UDP-N-acetyl-alpha-D-glucosamine = UDP-N-acetyl-3-O-(1-carboxyvinyl)-alpha-D-glucosamine + phosphate. It participates in cell wall biogenesis; peptidoglycan biosynthesis. Its function is as follows. Cell wall formation. Adds enolpyruvyl to UDP-N-acetylglucosamine. This chain is UDP-N-acetylglucosamine 1-carboxyvinyltransferase 1, found in Staphylococcus aureus (strain MW2).